Here is a 140-residue protein sequence, read N- to C-terminus: Large ribosomal subunit protein bL17 (140 aa).

Belongs to the bacterial ribosomal protein bL17 family. As to quaternary structure, part of the 50S ribosomal subunit. Contacts protein L32.

The polypeptide is Large ribosomal subunit protein bL17 (Gluconobacter oxydans (strain 621H) (Gluconobacter suboxydans)).